The primary structure comprises 282 residues: ADP-ribosyl cyclase/cyclic ADP-ribose hydrolase (282 aa).

The N-terminal stretch at 1–24 (MSPVAIIACVCLAVTLTSISPSEA) is a signal peptide. 5 cysteine pairs are disulfide-bonded: C39-C58, C75-C155, C136-C149, C230-C251, and C263-C272.

It belongs to the ADP-ribosyl cyclase family. Post-translationally, has different isoforms which may be the result of different amounts of phosphorylation. As to expression, immature occoyctes. Oocytes.

It localises to the cytoplasmic vesicle. It catalyses the reaction NAD(+) = cyclic ADP-beta-D-ribose + nicotinamide + H(+). The enzyme catalyses nicotinate + NADP(+) = nicotinate-adenine dinucleotide phosphate + nicotinamide. It carries out the reaction 2'-phospho-cyclic ADP-ribose + nicotinate = nicotinate-adenine dinucleotide phosphate. Activity is presumably regulated by its sequestration in vesicles before egg fertilization. After fertilization and upon NADase release, it could then be regulated via its potential phosphorylation sites. Synthesizes cyclic ADP-ribose (cADPR), a second messenger for calcium mobilization from endoplasmic reticulum; ADP-ribose is a minor product. Synthesizes the Ca(2+) mobilizer nicotinate-adenine dinucleotide phosphate from 2'-phospho-cADPR and nicotinic acid as well as from NADP(+) and nicotinic acid; with NADP(+) as substrate preferentially catalyzes NADP(+) hydrolysis rather than NAADP(+) synthesis, about 70-fold better at pH 7.4. Has cADPR hydrolase activity at very high enzyme concentrations, which is probably not physiological. The conversion of NAD(+) into ADP-ribose is also only observed at high enzyme concentrations and results from the hydrolysis of cADP-ribose. This Aplysia californica (California sea hare) protein is ADP-ribosyl cyclase/cyclic ADP-ribose hydrolase.